The sequence spans 61 residues: Metallothionein-2D (61 aa).

The residue at position 1 (Met1) is an N-acetylmethionine. Residues 1-29 (MDPNCSCATRDSCACASSCKCKECKCTSC) are beta. A divalent metal cation is bound by residues Cys5, Cys7, Cys13, Cys15, Cys19, Cys21, Cys24, Cys26, Cys29, Cys33, Cys34, Cys36, Cys37, Cys41, Cys44, Cys48, Cys50, Cys57, Cys59, and Cys60. Residues 30-61 (KKSCCSCCPAGCTKCAQGCICKGASDKCSCCA) are alpha.

The protein belongs to the metallothionein superfamily. Type 1 family. As to quaternary structure, monomer.

Metallothioneins have a high content of cysteine residues that bind various heavy metals; these proteins are transcriptionally regulated by both heavy metals and glucocorticoids. This is Metallothionein-2D from Oryctolagus cuniculus (Rabbit).